A 240-amino-acid polypeptide reads, in one-letter code: MQPQYQMGYDRAITVFSPDGRLYQVEYAREAVKRGTTAVGIKCSEGVVLIVDKRVTSRLLEPVSIEKIFKIDAHIGVASSGLVGDARSLVDRARVESQINRVSYNEPINVEILAKKLCDHMQTYTQFGGARPYGTALLIAGVSDGEARLFETDPSGTLLEYKATGIGTGRPAVIKTFEDEYQEDADFSGAIRLGIKALHAATEGKLDVSAIEIGVVSIETGEFRKMEKDEVKAYVDQFEE.

It belongs to the peptidase T1A family. The 20S proteasome core is composed of 14 alpha and 14 beta subunits that assemble into four stacked heptameric rings, resulting in a barrel-shaped structure. The two inner rings, each composed of seven catalytic beta subunits, are sandwiched by two outer rings, each composed of seven alpha subunits. The catalytic chamber with the active sites is on the inside of the barrel. Has a gated structure, the ends of the cylinder being occluded by the N-termini of the alpha-subunits. Is capped at one or both ends by the proteasome regulatory ATPase, PAN.

The protein resides in the cytoplasm. Its activity is regulated as follows. The formation of the proteasomal ATPase PAN-20S proteasome complex, via the docking of the C-termini of PAN into the intersubunit pockets in the alpha-rings, triggers opening of the gate for substrate entry. Interconversion between the open-gate and close-gate conformations leads to a dynamic regulation of the 20S proteasome proteolysis activity. Component of the proteasome core, a large protease complex with broad specificity involved in protein degradation. The sequence is that of Proteasome subunit alpha from Methanoculleus marisnigri (strain ATCC 35101 / DSM 1498 / JR1).